A 198-amino-acid chain; its full sequence is Nucleoside triphosphate pyrophosphatase (198 aa).

The Proton acceptor role is filled by Asp-72.

The protein belongs to the Maf family. A divalent metal cation is required as a cofactor.

The protein resides in the cytoplasm. The enzyme catalyses a ribonucleoside 5'-triphosphate + H2O = a ribonucleoside 5'-phosphate + diphosphate + H(+). The catalysed reaction is a 2'-deoxyribonucleoside 5'-triphosphate + H2O = a 2'-deoxyribonucleoside 5'-phosphate + diphosphate + H(+). In terms of biological role, nucleoside triphosphate pyrophosphatase. May have a dual role in cell division arrest and in preventing the incorporation of modified nucleotides into cellular nucleic acids. The sequence is that of Nucleoside triphosphate pyrophosphatase from Corynebacterium diphtheriae (strain ATCC 700971 / NCTC 13129 / Biotype gravis).